We begin with the raw amino-acid sequence, 499 residues long: Cysteine--tRNA ligase (499 aa).

A Zn(2+)-binding site is contributed by Cys-31. The 'HIGH' region signature appears at 33-43; that stretch reads VTVYDLCHLGH. 3 residues coordinate Zn(2+): Cys-215, His-240, and Glu-244. The 'KMSKS' region motif lies at 272 to 276; sequence KMSKS. Residue Lys-275 coordinates ATP.

It belongs to the class-I aminoacyl-tRNA synthetase family. In terms of assembly, monomer. It depends on Zn(2+) as a cofactor.

It is found in the cytoplasm. The enzyme catalyses tRNA(Cys) + L-cysteine + ATP = L-cysteinyl-tRNA(Cys) + AMP + diphosphate. The protein is Cysteine--tRNA ligase of Synechococcus sp. (strain WH7803).